Consider the following 339-residue polypeptide: Sperm acrosome membrane-associated protein 6 (339 aa).

Positions 1 to 41 (MTSQRSLSSPQTRRPSVMGLISLVGSIVLLFLLIFRASTWA) are cleaved as a signal peptide. The short motif at 42–45 (CLFC) is the CXXC motif element. Cystine bridges form between cysteine 42–cysteine 155, cysteine 45–cysteine 158, cysteine 56–cysteine 70, cysteine 140–cysteine 163, cysteine 144–cysteine 169, and cysteine 186–cysteine 241. The Extracellular portion of the chain corresponds to 42–310 (CLFCFTTYEE…NPQALTLGNL (269 aa)). The CXXC motif signature appears at 155–158 (CSGC). Residues 166 to 251 (PLDCPVQDML…VILHDQRPLA (86 aa)) form the Ig-like domain. N-linked (GlcNAc...) asparagine glycosylation occurs at asparagine 258. The helical transmembrane segment at 311–331 (FLLAATAALGSASVTLLVWLF) threads the bilayer. Over 332–339 (FRWYLSGN) the chain is Cytoplasmic.

It belongs to the SPACA6 family. In terms of assembly, forms a complex with IZUMO1 and TMEM81 on spermatocyte cell membrane required for fertilization. As to expression, highly expressed in testis. Minor expression also detected in epididymis, seminal vesicle and ovary. Predominantly expressed in testicular germ cells during spermiogenesis. Most abundant in round spermatids and detected at lower levels in elongating spermatids.

The protein localises to the cytoplasmic vesicle. It localises to the secretory vesicle. It is found in the acrosome membrane. Its function is as follows. Sperm protein required for fusion of sperm with the egg membrane during fertilization. May regulate the expression of sperm surface protein DCST2. In Mus musculus (Mouse), this protein is Sperm acrosome membrane-associated protein 6.